The chain runs to 65 residues: uncharacterized protein (65 aa).

This is an uncharacterized protein from Rickettsia conorii (strain ATCC VR-613 / Malish 7).